The chain runs to 314 residues: MNSLWMGNLEPYMDEDFICRAFAQMGETVVKIRLIRDKITGKNAGYGFVELADDTAVERCLRKVNGKPLPGATPPKRFKLSRSNYGKQGESSTFSLFVSDLTPDVDDGMLYEFFHYHFSSCCSGKIVLDANGHSKCCGFVSFESEREQKRALVDLQGATGLGKKALRLSLASSRVNKKKESSENQIWQYHSDSKNASFINQYYYPQNLSYLSTYDWNYSLDYLNPSQNTTPVDVTQSEQTEDDDLEYPDSEINVTEANETFMAQSEELYSALIGCFFQPPESWDGVTCSASSYLPEPINQYEMEDSCSSNWVTT.

2 RRM domains span residues 2 to 85 (NSLW…RSNY) and 94 to 173 (FSLF…LASS).

Belongs to the RRM TRSPAP family.

It is found in the nucleus. The protein localises to the cytoplasm. Functionally, involved in the early steps of selenocysteine biosynthesis and tRNA(Sec) charging to the later steps resulting in the cotranslational incorporation of selenocysteine into selenoproteins. The chain is tRNA selenocysteine 1-associated protein 1 from Danio rerio (Zebrafish).